A 145-amino-acid chain; its full sequence is MQEVELFTDGGCRGNPGPGGWGALLRFGGVEKELKGAELDTTNNRMELTAAIEGLKALKRPCKVTLTTDSQYVKNGITQWMTNWKKNNWKTAAKKPVKNKDLWQALDEALQPHDVTWAWVKGHSGHDENERVDELANQAMDELTG.

Residues 1 to 141 enclose the RNase H type-1 domain; it reads MQEVELFTDG…VDELANQAMD (141 aa). Residues Asp9, Glu47, Asp69, and Asp133 each contribute to the Mg(2+) site.

It belongs to the RNase H family. In terms of assembly, monomer. It depends on Mg(2+) as a cofactor.

It is found in the cytoplasm. The catalysed reaction is Endonucleolytic cleavage to 5'-phosphomonoester.. Its function is as follows. Endonuclease that specifically degrades the RNA of RNA-DNA hybrids. This Hydrogenovibrio crunogenus (strain DSM 25203 / XCL-2) (Thiomicrospira crunogena) protein is Ribonuclease H.